Reading from the N-terminus, the 430-residue chain is Bifunctional protein GlmU (430 aa).

The pyrophosphorylase stretch occupies residues 1–227; sequence MISKTHTFVI…GEEATGINNR (227 aa). UDP-N-acetyl-alpha-D-glucosamine-binding positions include Lys-25, Gln-74, 79–80, 104–106, Gly-140, Glu-154, Asn-168, and Asn-225; these read GT and YGD. Asp-106 serves as a coordination point for Mg(2+). A Mg(2+)-binding site is contributed by Asn-225. Residues 228–248 are linker; the sequence is NDLIKAEFYFQENKRKIFTDS. An N-acetyltransferase region spans residues 249–430; that stretch reads GVTLVAPETV…REKQVTKRIK (182 aa). Residues Arg-314 and Lys-332 each contribute to the UDP-N-acetyl-alpha-D-glucosamine site. His-344 functions as the Proton acceptor in the catalytic mechanism. The UDP-N-acetyl-alpha-D-glucosamine site is built by Tyr-347 and Asn-358. Acetyl-CoA contacts are provided by residues Ala-361, 367–368, Ala-404, and Arg-421; that span reads NY.

In the N-terminal section; belongs to the N-acetylglucosamine-1-phosphate uridyltransferase family. The protein in the C-terminal section; belongs to the transferase hexapeptide repeat family. In terms of assembly, homotrimer. Requires Mg(2+) as cofactor.

The protein localises to the cytoplasm. It catalyses the reaction alpha-D-glucosamine 1-phosphate + acetyl-CoA = N-acetyl-alpha-D-glucosamine 1-phosphate + CoA + H(+). The enzyme catalyses N-acetyl-alpha-D-glucosamine 1-phosphate + UTP + H(+) = UDP-N-acetyl-alpha-D-glucosamine + diphosphate. Its pathway is nucleotide-sugar biosynthesis; UDP-N-acetyl-alpha-D-glucosamine biosynthesis; N-acetyl-alpha-D-glucosamine 1-phosphate from alpha-D-glucosamine 6-phosphate (route II): step 2/2. The protein operates within nucleotide-sugar biosynthesis; UDP-N-acetyl-alpha-D-glucosamine biosynthesis; UDP-N-acetyl-alpha-D-glucosamine from N-acetyl-alpha-D-glucosamine 1-phosphate: step 1/1. It participates in bacterial outer membrane biogenesis; LPS lipid A biosynthesis. Its function is as follows. Catalyzes the last two sequential reactions in the de novo biosynthetic pathway for UDP-N-acetylglucosamine (UDP-GlcNAc). The C-terminal domain catalyzes the transfer of acetyl group from acetyl coenzyme A to glucosamine-1-phosphate (GlcN-1-P) to produce N-acetylglucosamine-1-phosphate (GlcNAc-1-P), which is converted into UDP-GlcNAc by the transfer of uridine 5-monophosphate (from uridine 5-triphosphate), a reaction catalyzed by the N-terminal domain. This Wolbachia pipientis wMel protein is Bifunctional protein GlmU.